The sequence spans 299 residues: Probable lipid kinase YegS (299 aa).

A DAGKc domain is found at 2-133 (ANFPASLLIL…IDMARVNDKT (132 aa)). Residues T40, 66-72 (GDGTINE), and T95 each bind ATP. The Mg(2+) site is built by L215, D218, and L220. Catalysis depends on E271, which acts as the Proton acceptor.

The protein belongs to the diacylglycerol/lipid kinase family. YegS lipid kinase subfamily. Mg(2+) serves as cofactor. The cofactor is Ca(2+).

It localises to the cytoplasm. Probably phosphorylates lipids; the in vivo substrate is unknown. This Salmonella newport (strain SL254) protein is Probable lipid kinase YegS.